The chain runs to 500 residues: Cholesterol 24-hydroxylase (500 aa).

The helical transmembrane segment at 3-23 (PGLLLLGSAVLLAFGLCCTFV) threads the bilayer. Cys-437 contacts heme.

The protein belongs to the cytochrome P450 family. The cofactor is heme. As to expression, expressed in high level in the pyramidal cells of the hippocampus, Purkinje cells of the cerebellum, and neuronal cell bodies in layers II/III, V, and VI of the cortex. Expressed in hippocampal and cerebellar interneurons, in retinal ganglion cells, and in a subset of retinal cells localized to the inner nuclear layer (at protein level).

It is found in the endoplasmic reticulum membrane. The protein resides in the microsome membrane. The protein localises to the postsynapse. Its subcellular location is the presynapse. It localises to the cell projection. It is found in the dendrite. The enzyme catalyses cholesterol + reduced [NADPH--hemoprotein reductase] + O2 = (24S)-hydroxycholesterol + oxidized [NADPH--hemoprotein reductase] + H2O + H(+). The catalysed reaction is cholestanol + reduced [NADPH--hemoprotein reductase] + O2 = (24S)-hydroxycholestanol + oxidized [NADPH--hemoprotein reductase] + H2O + H(+). It carries out the reaction 7-dehydrocholesterol + reduced [NADPH--hemoprotein reductase] + O2 = cholesta-5,7-dien-3beta,24S-diol + oxidized [NADPH--hemoprotein reductase] + H2O + H(+). It catalyses the reaction 7-dehydrocholesterol + reduced [NADPH--hemoprotein reductase] + O2 = cholesta-5,7-dien-3beta,25-diol + oxidized [NADPH--hemoprotein reductase] + H2O + H(+). The enzyme catalyses desmosterol + reduced [NADPH--hemoprotein reductase] + O2 = (24Z),26-hydroxydesmosterol + oxidized [NADPH--hemoprotein reductase] + H2O + H(+). The catalysed reaction is desmosterol + reduced [NADPH--hemoprotein reductase] + O2 = (24S)-25-epoxycholesterol + oxidized [NADPH--hemoprotein reductase] + H2O + H(+). It carries out the reaction 4beta-hydroxycholesterol + reduced [NADPH--hemoprotein reductase] + O2 = 4beta,24S-dihydroxycholesterol + oxidized [NADPH--hemoprotein reductase] + H2O + H(+). It catalyses the reaction (24S)-hydroxycholesterol + reduced [NADPH--hemoprotein reductase] + O2 = (24S,25R)-24,26-dihydroxycholesterol + oxidized [NADPH--hemoprotein reductase] + H2O + H(+). The enzyme catalyses (24S)-hydroxycholesterol + reduced [NADPH--hemoprotein reductase] + O2 = 24S,25-dihydroxycholesterol + oxidized [NADPH--hemoprotein reductase] + H2O + H(+). The catalysed reaction is 7alpha-hydroxycholesterol + reduced [NADPH--hemoprotein reductase] + O2 = (24S)-7alpha-dihydroxycholesterol + oxidized [NADPH--hemoprotein reductase] + H2O + H(+). It carries out the reaction progesterone + reduced [NADPH--hemoprotein reductase] + O2 = 17alpha-hydroxyprogesterone + oxidized [NADPH--hemoprotein reductase] + H2O + H(+). It catalyses the reaction testosterone + reduced [NADPH--hemoprotein reductase] + O2 = 16beta,17beta-dihydroxyandrost-4-en-3-one + oxidized [NADPH--hemoprotein reductase] + H2O + H(+). The enzyme catalyses testosterone + reduced [NADPH--hemoprotein reductase] + O2 = 2-hydroxytestosterone + oxidized [NADPH--hemoprotein reductase] + H2O + H(+). The catalysed reaction is testosterone + reduced [NADPH--hemoprotein reductase] + O2 = 6beta,17beta-dihydroxyandrost-4-en-3-one + oxidized [NADPH--hemoprotein reductase] + H2O + H(+). The protein operates within steroid metabolism; cholesterol degradation. It functions in the pathway lipid metabolism; C21-steroid hormone metabolism. Its function is as follows. P450 monooxygenase that plays a major role in cholesterol homeostasis in the brain. Primarily catalyzes the hydroxylation (with S stereochemistry) at C-24 of cholesterol side chain, triggering cholesterol diffusion out of neurons and its further degradation. By promoting constant cholesterol elimination in neurons, may activate the mevalonate pathway and coordinate the synthesis of new cholesterol and nonsterol isoprenoids involved in synaptic activity and learning. Further hydroxylates cholesterol derivatives and hormone steroids on both the ring and side chain of these molecules, converting them into active oxysterols involved in lipid signaling and biosynthesis. Acts as an epoxidase converting cholesta-5,24-dien-3beta-ol/desmosterol into (24S),25-epoxycholesterol, an abundant lipid ligand of nuclear NR1H2 and NR1H3 receptors shown to promote neurogenesis in developing brain. May also catalyze the oxidative metabolism of xenobiotics, such as clotrimazole. This chain is Cholesterol 24-hydroxylase, found in Mus musculus (Mouse).